Here is a 42-residue protein sequence, read N- to C-terminus: Thymosin beta-10 (42 aa).

Composition is skewed to basic and acidic residues over residues 1–25 (MADKPDLGEINSFDKAKLKKTETQE) and 33–42 (ETIEQEKQAK). The tract at residues 1–42 (MADKPDLGEINSFDKAKLKKTETQEKNTLPTKETIEQEKQAK) is disordered. The residue at position 2 (Ala2) is an N-acetylalanine. N6-acetyllysine is present on Lys4. Ser12 bears the Phosphoserine mark. Lys15 is subject to N6-acetyllysine. 3 positions are modified to phosphothreonine: Thr21, Thr23, and Thr34. The residue at position 39 (Lys39) is an N6-acetyllysine.

This sequence belongs to the thymosin beta family. As to expression, distributed in numerous types of tissues, including thymus, spleen, lung, liver and muscle.

Its subcellular location is the cytoplasm. It is found in the cytoskeleton. Its function is as follows. Plays an important role in the organization of the cytoskeleton. Binds to and sequesters actin monomers (G actin) and therefore inhibits actin polymerization. This chain is Thymosin beta-10 (TMSB10), found in Bos taurus (Bovine).